The primary structure comprises 550 residues: Phospholipase B-like 1 (550 aa).

The signal sequence occupies residues 1–39; it reads MCHRSHGRSLRPPSPLLLLLPLLLQSPWAAGAAEKHNSA. A glycan (N-linked (GlcNAc...) (high mannose) asparagine; alternate) is linked at asparagine 72. A glycan (N-linked (GlcNAc...) (hybrid) asparagine; alternate) is linked at asparagine 72. The propeptide at 210–228 is removed in mature form; that stretch reads LSPTKSSSLKKFKIWEMGH. Residues asparagine 309 and asparagine 412 are each glycosylated (N-linked (GlcNAc...) (high mannose) asparagine; alternate). 2 N-linked (GlcNAc...) (hybrid) asparagine; alternate glycosylation sites follow: asparagine 309 and asparagine 412. 2 disulfide bridges follow: cysteine 471-cysteine 476 and cysteine 475-cysteine 490. Asparagine 527 carries N-linked (GlcNAc...) (high mannose) asparagine; alternate glycosylation. Residue asparagine 527 is glycosylated (N-linked (GlcNAc...) (hybrid) asparagine; alternate).

The protein belongs to the phospholipase B-like family. May form a homodimer, each monomer is composed of a chain A and a chain B. Post-translationally, the maturation cleavages that produces chains A and B are required to open the putative substrate binding pocket. Both chains A and B remain associated in the mature protein.

It localises to the lysosome. Exhibits weak phospholipase activity, acting on various phospholipids, including phosphatidylcholine, phosphatidylinositol, phosphatidylethanolamine and lysophospholipids. However, in view of the small size of the putative binding pocket, it has been proposed that it may act rather as an amidase or a peptidase. In Rattus norvegicus (Rat), this protein is Phospholipase B-like 1 (Plbd1).